Here is a 192-residue protein sequence, read N- to C-terminus: Guanylate kinase (192 aa).

One can recognise a Guanylate kinase-like domain in the interval G7–V185. S14–S21 provides a ligand contact to ATP.

The protein belongs to the guanylate kinase family.

Its subcellular location is the cytoplasm. The catalysed reaction is GMP + ATP = GDP + ADP. Its function is as follows. Essential for recycling GMP and indirectly, cGMP. This Rickettsia felis (strain ATCC VR-1525 / URRWXCal2) (Rickettsia azadi) protein is Guanylate kinase.